Here is an 817-residue protein sequence, read N- to C-terminus: Cargo-transport protein YPP1 (817 aa).

Belongs to the YPP1 family. In terms of assembly, interacts with ribosomes.

Its subcellular location is the cytoplasmic granule. It is found in the cell membrane. Its function is as follows. Involved in endocytosis. The chain is Cargo-transport protein YPP1 (YPP1) from Saccharomyces cerevisiae (strain ATCC 204508 / S288c) (Baker's yeast).